The primary structure comprises 655 residues: RalA-binding protein 1 (655 aa).

Positions 1-158 (MTECFLPPTS…KKSKDLTAAD (158 aa)) are disordered. Position 2 is an N-acetylthreonine (T2). Polar residues predominate over residues 24–33 (LTRTPSSEEI). Residues S29, S30, and S34 each carry the phosphoserine modification. The residue at position 44 (T44) is a Phosphothreonine. 2 positions are modified to phosphoserine: S48 and S62. Residues 52–68 (DILHEPPDVVSDDEKDH) show a composition bias toward basic and acidic residues. 69–74 (GKKKGK) is an ATP binding site. Positions 69 to 79 (GKKKGKFKKKE) are enriched in basic residues. 2 positions are modified to phosphoserine: S92 and S93. A compositionally biased stretch (basic residues) spans 102-118 (KMKRSKGIHVFKKPSFS). Positions 102-119 (KMKRSKGIHVFKKPSFSK) are nuclear localization signal. Basic and acidic residues predominate over residues 119 to 155 (KKKEKDFKIKEKPKEEKHKEEKHKEEKHKEKKSKDLT). The segment at 154–219 (LTAADVVKQW…PAVFRECIDY (66 aa)) is mediates association with membranes and could form transmembrane domains. The Rho-GAP domain occupies 192–380 (IPLADAVERT…VVLKQVMKPL (189 aa)). The tract at residues 403–499 (RRQEFLLNCL…LTEQEELLAM (97 aa)) is mediates interaction with RALA and RALB. 418 to 425 (GGIKDLSK) provides a ligand contact to ATP. Phosphoserine occurs at positions 461 and 463. Positions 500 to 655 (EQFLRRQIAS…PSRDRKETSI (156 aa)) are mediates interaction with REPS1 and REPS2. Disordered stretches follow at residues 525–551 (QSRQQHGRSETEEYSSESESESEDEEE) and 601–655 (AEQQ…ETSI). Residues 536-551 (EEYSSESESESEDEEE) are compositionally biased toward acidic residues. Basic and acidic residues predominate over residues 624–655 (GVLEPKAAKEQPKAGKEPAKPSPSRDRKETSI). Residue S645 is modified to Phosphoserine.

As to quaternary structure, interacts with the GTP-bound form of RALA (via effector domain); during mitosis, recruits RALBP1 to the mitochondrion where it promotes DNM1L phosphorylation and mitochondrial fission. Interacts with DNM1L; mediates its mitotic kinase cyclin B-CDK1-mediated phosphorylation during mitosis to promote mitochondrial fission. Interacts with the mitotic kinase cyclin B-CDK1 during mitosis. Interacts with the GTP-bound form of RALB (via effector domain). Interacts with REPS1; the interaction is direct and does not affect RALA-binding nor GTPase activator activity of RALBP1. Interacts with REPS2; the interaction is direct and does not affect RALA-binding nor GTPase activator activity of RALBP1. Interacts with EPN1, NUMB and TFAP2A during interphase and mitosis. Interacts with AP2M1; as part of the AP2 complex. Interacts with CDC42. Interacts with RAC1. Tyrosine-phosphorylated upon stimulation of cells with EGF. Post-translationally, may undergo proteolytic cleavage to give peptides which reassemble to form a transporter complex. In terms of tissue distribution, expressed ubiquitously but at low levels. Shows a strong expression in the erythrocytes.

The protein resides in the cell membrane. Its subcellular location is the cytoplasm. It is found in the cytosol. It localises to the cytoskeleton. The protein localises to the spindle pole. The protein resides in the nucleus. Its subcellular location is the mitochondrion. The enzyme catalyses an S-substituted glutathione(in) + ATP + H2O = an S-substituted glutathione(out) + ADP + phosphate + H(+). It catalyses the reaction ATP + H2O + xenobioticSide 1 = ADP + phosphate + xenobioticSide 2.. The catalysed reaction is leukotriene C4(in) + ATP + H2O = leukotriene C4(out) + ADP + phosphate + H(+). Multifunctional protein that functions as a downstream effector of RALA and RALB. As a GTPase-activating protein/GAP can inactivate CDC42 and RAC1 by stimulating their GTPase activity. As part of the Ral signaling pathway, may also regulate ligand-dependent EGF and insulin receptors-mediated endocytosis. During mitosis, may act as a scaffold protein in the phosphorylation of EPSIN/EPN1 by the mitotic kinase cyclin B-CDK1, preventing endocytosis during that phase of the cell cycle. During mitosis, also controls mitochondrial fission as an effector of RALA. Recruited to mitochondrion by RALA, acts as a scaffold to foster the mitotic kinase cyclin B-CDK1-mediated phosphorylation and activation of DNM1L. Functionally, could also function as a primary ATP-dependent active transporter for glutathione conjugates of electrophiles. May also actively catalyze the efflux of a wide range of substrates including xenobiotics like doxorubicin (DOX) contributing to cell multidrug resistance. In Homo sapiens (Human), this protein is RalA-binding protein 1.